We begin with the raw amino-acid sequence, 404 residues long: CCA-adding enzyme (404 aa).

The ATP site is built by Gly-27 and Arg-30. The CTP site is built by Gly-27 and Arg-30. Mg(2+) contacts are provided by Asp-40 and Asp-42. ATP is bound by residues Arg-111, Asp-154, Arg-157, Arg-160, and Arg-163. The CTP site is built by Arg-111, Asp-154, Arg-157, Arg-160, and Arg-163.

It belongs to the tRNA nucleotidyltransferase/poly(A) polymerase family. Bacterial CCA-adding enzyme type 3 subfamily. In terms of assembly, homodimer. Mg(2+) serves as cofactor.

The catalysed reaction is a tRNA precursor + 2 CTP + ATP = a tRNA with a 3' CCA end + 3 diphosphate. The enzyme catalyses a tRNA with a 3' CCA end + 2 CTP + ATP = a tRNA with a 3' CCACCA end + 3 diphosphate. Functionally, catalyzes the addition and repair of the essential 3'-terminal CCA sequence in tRNAs without using a nucleic acid template. Adds these three nucleotides in the order of C, C, and A to the tRNA nucleotide-73, using CTP and ATP as substrates and producing inorganic pyrophosphate. tRNA 3'-terminal CCA addition is required both for tRNA processing and repair. Also involved in tRNA surveillance by mediating tandem CCA addition to generate a CCACCA at the 3' terminus of unstable tRNAs. While stable tRNAs receive only 3'-terminal CCA, unstable tRNAs are marked with CCACCA and rapidly degraded. The polypeptide is CCA-adding enzyme (Geobacillus kaustophilus (strain HTA426)).